The chain runs to 973 residues: E3 ubiquitin-protein ligase BRE1A (973 aa).

Residues 1 to 37 form a disordered region; sequence MSGIGNKRAAGEPGTSMPPEKKTAVEDSGTTVETIKL. Lys-21 is subject to N6-acetyllysine. Ser-41 is modified (phosphoserine). Residues 43–90 adopt a coiled-coil conformation; that stretch reads TEELDIRTLQSKNRKLAEMLDQRQAIEDELREHIEKLERRQATDDASL. The interval 128–153 is disordered; sequence VVPEPEPDSDSNQERKDDRERGDGQE. 2 positions are modified to phosphoserine: Ser-136 and Ser-138. Residues 139–151 are compositionally biased toward basic and acidic residues; the sequence is NQERKDDRERGDG. Coiled-coil stretches lie at residues 168 to 378 and 429 to 896; these read EEME…VKET and SLHK…TTKK. Residues Lys-348 and Lys-510 each carry the N6-acetyllysine modification. Residues 507–620 form a disordered region; sequence DLNKTRLRSG…GKHDDGRKKE (114 aa). The residue at position 522 (Ser-522) is a Phosphoserine. 2 stretches are compositionally biased toward basic and acidic residues: residues 527-544 and 553-620; these read EDPK…EDLA and SQED…RKKE. Residue Ser-560 is modified to Phosphoserine. An RING-type zinc finger spans residues 920-959; sequence CPCCNMRKKDAVLTKCFHVFCFECVKTRYDTRQRKCPKCN.

The protein belongs to the BRE1 family. As to quaternary structure, component of the RNF20/40 complex (also known as BRE1 complex) probably composed of 2 copies of RNF20/BRE1A and 2 copies of RNF40/BRE1B. Interacts with UBE2E1/UBCH6. Interacts with p53/TP53 and WAC. Interacts with PAF1; the interaction mediates the association of the PAF1 and RNF20/40 complexes which is a prerequsite for recruitment of UBE2A/B. Interacts with PA2G4. Interacts with FBXL19.

The protein localises to the nucleus. The catalysed reaction is S-ubiquitinyl-[E2 ubiquitin-conjugating enzyme]-L-cysteine + [acceptor protein]-L-lysine = [E2 ubiquitin-conjugating enzyme]-L-cysteine + N(6)-ubiquitinyl-[acceptor protein]-L-lysine.. It participates in protein modification; protein ubiquitination. Functionally, component of the RNF20/40 E3 ubiquitin-protein ligase complex that mediates monoubiquitination of 'Lys-120' of histone H2B (H2BK120ub1). H2BK120ub1 gives a specific tag for epigenetic transcriptional activation and is also prerequisite for histone H3 'Lys-4' and 'Lys-79' methylation (H3K4me and H3K79me, respectively). It thereby plays a central role in histone code and gene regulation. The RNF20/40 complex forms a H2B ubiquitin ligase complex in cooperation with the E2 enzyme UBE2A or UBE2B; reports about the cooperation with UBE2E1/UBCH are contradictory. Required for transcriptional activation of Hox genes. Recruited to the MDM2 promoter, probably by being recruited by p53/TP53, and thereby acts as a transcriptional coactivator. Mediates the polyubiquitination of PA2G4 leading to its proteasome-mediated degradation. The polypeptide is E3 ubiquitin-protein ligase BRE1A (Rnf20) (Mus musculus (Mouse)).